The primary structure comprises 285 residues: Iodotyrosine deiodinase 1 (285 aa).

A helical transmembrane segment spans residues 1–21; that stretch reads MFLLTPVLVAVVCILVVWVFK. FMN is bound by residues 96–100 and 124–125; these read RRSVR and SG. Ala-126, Glu-153, Tyr-157, and Lys-178 together coordinate 3,5-diiodo-L-tyrosine. The 3-iodo-L-tyrosine site is built by Ala-126, Glu-153, Tyr-157, and Lys-178. FMN contacts are provided by residues 233-235 and Arg-275; that span reads TTT.

This sequence belongs to the nitroreductase family. Homodimer. FMN is required as a cofactor.

It localises to the cell membrane. It is found in the cytoplasmic vesicle membrane. The enzyme catalyses 2 iodide + L-tyrosine + 2 NADP(+) = 3,5-diiodo-L-tyrosine + 2 NADPH + H(+). It catalyses the reaction iodide + L-tyrosine + NADP(+) = 3-iodo-L-tyrosine + NADPH. It carries out the reaction 3-iodo-L-tyrosine + iodide + NADP(+) = 3,5-diiodo-L-tyrosine + NADPH + H(+). The catalysed reaction is L-tyrosine + chloride + NADP(+) = 3-chloro-L-tyrosine + NADPH. The enzyme catalyses bromide + L-tyrosine + NADP(+) = 3-bromo-L-tyrosine + NADPH. Its function is as follows. Catalyzes the dehalogenation of halotyrosines such as 3-bromo-L-tyrosine, 3-chloro-L-tyrosine, 3-iodo-L-tyrosine and 3,5-diiodo-L-tyrosine. During thyroid hormone biosynthesis, facilitates iodide salvage by catalysing the oxidative NADPH-dependent deiodination of the halogenated by-products of thyroid hormone production, monoiodotyrosine (L-MIT) and diiodotyrosine (L-DIT). The scavanged iodide can then reenter the hormone-producing pathways. Acts more efficiently on 3-iodo-L-tyrosine than 3,5-diiodo-L-tyrosine. The chain is Iodotyrosine deiodinase 1 (Iyd) from Mus musculus (Mouse).